The primary structure comprises 200 residues: Small ribosomal subunit protein uS5 (200 aa).

Over residues 1–22 (MAEERGEKRGRRRDRENPRDRD) the composition is skewed to basic and acidic residues. The tract at residues 1-26 (MAEERGEKRGRRRDRENPRDRDDESS) is disordered. Residues 28–91 (LVDKLVGINR…EEAKRNLVRI (64 aa)) form the S5 DRBM domain.

The protein belongs to the universal ribosomal protein uS5 family. Part of the 30S ribosomal subunit. Contacts proteins S4 and S8.

In terms of biological role, with S4 and S12 plays an important role in translational accuracy. Functionally, located at the back of the 30S subunit body where it stabilizes the conformation of the head with respect to the body. The protein is Small ribosomal subunit protein uS5 of Hyphomonas neptunium (strain ATCC 15444).